The primary structure comprises 342 residues: S-adenosylmethionine:tRNA ribosyltransferase-isomerase (342 aa).

The protein belongs to the QueA family. Monomer.

The protein localises to the cytoplasm. The enzyme catalyses 7-aminomethyl-7-carbaguanosine(34) in tRNA + S-adenosyl-L-methionine = epoxyqueuosine(34) in tRNA + adenine + L-methionine + 2 H(+). It participates in tRNA modification; tRNA-queuosine biosynthesis. Functionally, transfers and isomerizes the ribose moiety from AdoMet to the 7-aminomethyl group of 7-deazaguanine (preQ1-tRNA) to give epoxyqueuosine (oQ-tRNA). This Listeria welshimeri serovar 6b (strain ATCC 35897 / DSM 20650 / CCUG 15529 / CIP 8149 / NCTC 11857 / SLCC 5334 / V8) protein is S-adenosylmethionine:tRNA ribosyltransferase-isomerase.